Reading from the N-terminus, the 136-residue chain is Small ribosomal subunit protein uS9 (136 aa).

This sequence belongs to the universal ribosomal protein uS9 family.

This is Small ribosomal subunit protein uS9 from Borrelia hermsii (strain HS1 / DAH).